Consider the following 151-residue polypeptide: Deoxyuridine 5'-triphosphate nucleotidohydrolase (151 aa).

Residues R70 to G72, N83, L87 to D89, and M97 contribute to the substrate site.

The protein belongs to the dUTPase family. Mg(2+) is required as a cofactor.

It carries out the reaction dUTP + H2O = dUMP + diphosphate + H(+). It participates in pyrimidine metabolism; dUMP biosynthesis; dUMP from dCTP (dUTP route): step 2/2. Functionally, this enzyme is involved in nucleotide metabolism: it produces dUMP, the immediate precursor of thymidine nucleotides and it decreases the intracellular concentration of dUTP so that uracil cannot be incorporated into DNA. The polypeptide is Deoxyuridine 5'-triphosphate nucleotidohydrolase (Azotobacter vinelandii (strain DJ / ATCC BAA-1303)).